We begin with the raw amino-acid sequence, 325 residues long: Aspartate carbamoyltransferase catalytic subunit (325 aa).

Arg64 and Thr65 together coordinate carbamoyl phosphate. Lys92 contributes to the L-aspartate binding site. Residues Arg114, His142, and Gln145 each coordinate carbamoyl phosphate. L-aspartate contacts are provided by Arg176 and Arg230. Carbamoyl phosphate is bound by residues Gly271 and Pro272.

Belongs to the aspartate/ornithine carbamoyltransferase superfamily. ATCase family. Heterododecamer (2C3:3R2) of six catalytic PyrB chains organized as two trimers (C3), and six regulatory PyrI chains organized as three dimers (R2).

The catalysed reaction is carbamoyl phosphate + L-aspartate = N-carbamoyl-L-aspartate + phosphate + H(+). It participates in pyrimidine metabolism; UMP biosynthesis via de novo pathway; (S)-dihydroorotate from bicarbonate: step 2/3. Functionally, catalyzes the condensation of carbamoyl phosphate and aspartate to form carbamoyl aspartate and inorganic phosphate, the committed step in the de novo pyrimidine nucleotide biosynthesis pathway. The sequence is that of Aspartate carbamoyltransferase catalytic subunit from Nitratidesulfovibrio vulgaris (strain DSM 19637 / Miyazaki F) (Desulfovibrio vulgaris).